We begin with the raw amino-acid sequence, 437 residues long: Endoplasmic reticulum protein SC65 (437 aa).

The first 18 residues, 1-18 (MARVAWGLLWLLLGSAGA), serve as a signal peptide directing secretion. Residue Asn-361 is glycosylated (N-linked (GlcNAc...) asparagine). Composition is skewed to acidic residues over residues 381–413 (DEMELEETEPPLEPEDALSDAEFEGEGDYEEGM) and 428–437 (AEAEPEPELA). The interval 381–437 (DEMELEETEPPLEPEDALSDAEFEGEGDYEEGMYADWWQEPDAKGDEAEAEPEPELA) is disordered.

It belongs to the leprecan family. As to quaternary structure, interacts with PLOD1, P3H3 and PPIB. Identified in a complex with PLOD1 and P3H3. Detected in fibroblasts (at protein level). Detected in spleen, prostate, testis, ovary, colon, pancreas, kidney, placenta and heart.

Its subcellular location is the endoplasmic reticulum. Part of a complex composed of PLOD1, P3H3 and P3H4 that catalyzes hydroxylation of lysine residues in collagen alpha chains and is required for normal assembly and cross-linking of collagen fibrils. Required for normal bone density and normal skin stability via its role in hydroxylation of lysine residues in collagen alpha chains and in collagen fibril assembly. This Homo sapiens (Human) protein is Endoplasmic reticulum protein SC65.